The sequence spans 176 residues: ADP-ribosylation factor-like protein 8d (176 aa).

Residues 21-26, 40-43, 62-66, and 121-124 each bind GTP; these read NSGKTS, MIPT, DLGGQ, and NKID.

It belongs to the small GTPase superfamily. Arf family. As to quaternary structure, interacts with tubulin.

The protein resides in the late endosome membrane. Its subcellular location is the lysosome membrane. The protein localises to the cytoplasm. It localises to the cytoskeleton. It is found in the spindle. In terms of biological role, may play a role in lysosome motility. May play a role in chromosome segregation. The chain is ADP-ribosylation factor-like protein 8d from Arabidopsis thaliana (Mouse-ear cress).